The primary structure comprises 704 residues: Protein NPG1 (704 aa).

TPR repeat units follow at residues 24 to 57 (NGICMKTTEVEAKLDEGNIQEAESSLREGLSLNF), 58 to 90 (EEARALLGRLEYQRGNLEGALRVFEGIDLQAAI), 177 to 210 (SHAVELLPALWKESGDYQEAISAYRRALLSQWNL), 309 to 342 (IERWNTLALSYSAAGQNSAAVNLLRKSLHKHEQP), 430 to 463 (PDLIFELGVQYAEQRNLKAASRYAKEFIDATGGS), 555 to 588 (FEVWHGLAYLYSSLSHWNDVEVCLKKAGELKQYS), 589 to 622 (ASMLHTEGRMWEGRKEFKPALAAFLDGLLLDGSS), and 662 to 695 (RKAWYYLGMVHKSDGRIADATDCFQAASMLEESD).

As to quaternary structure, interacts with calmodulin in a calcium-dependent manner. As to expression, expressed only in pollen and in pollen tubes.

In terms of biological role, calmodulin-binding protein essential for pollen germination, but not necessary for microsporogenesis or gametogenesis. The chain is Protein NPG1 from Arabidopsis thaliana (Mouse-ear cress).